A 67-amino-acid chain; its full sequence is Large ribosomal subunit protein uL29 (67 aa).

Belongs to the universal ribosomal protein uL29 family.

This is Large ribosomal subunit protein uL29 from Alkaliphilus oremlandii (strain OhILAs) (Clostridium oremlandii (strain OhILAs)).